A 564-amino-acid chain; its full sequence is NAD-dependent malic enzyme (564 aa).

The active-site Proton donor is the Tyr102. Position 155 (Arg155) interacts with NAD(+). The active-site Proton acceptor is Lys173. A divalent metal cation is bound by residues Glu244, Asp245, and Asp268. NAD(+) contacts are provided by Asp268 and Asn417.

Belongs to the malic enzymes family. As to quaternary structure, homotetramer. Requires Mg(2+) as cofactor. Mn(2+) serves as cofactor.

It catalyses the reaction (S)-malate + NAD(+) = pyruvate + CO2 + NADH. The catalysed reaction is oxaloacetate + H(+) = pyruvate + CO2. In Pseudomonas aeruginosa (strain LESB58), this protein is NAD-dependent malic enzyme.